The sequence spans 201 residues: Urease accessory protein UreG (201 aa).

11–18 (GPVGSGKT) serves as a coordination point for GTP.

The protein belongs to the SIMIBI class G3E GTPase family. UreG subfamily. As to quaternary structure, homodimer. UreD, UreF and UreG form a complex that acts as a GTP-hydrolysis-dependent molecular chaperone, activating the urease apoprotein by helping to assemble the nickel containing metallocenter of UreC. The UreE protein probably delivers the nickel.

The protein resides in the cytoplasm. Functionally, facilitates the functional incorporation of the urease nickel metallocenter. This process requires GTP hydrolysis, probably effectuated by UreG. The sequence is that of Urease accessory protein UreG from Prochlorococcus marinus subsp. pastoris (strain CCMP1986 / NIES-2087 / MED4).